A 236-amino-acid chain; its full sequence is 2,3,4,5-tetrahydropyridine-2,6-dicarboxylate N-acetyltransferase (236 aa).

The protein belongs to the transferase hexapeptide repeat family. DapH subfamily.

It catalyses the reaction (S)-2,3,4,5-tetrahydrodipicolinate + acetyl-CoA + H2O = L-2-acetamido-6-oxoheptanedioate + CoA. It functions in the pathway amino-acid biosynthesis; L-lysine biosynthesis via DAP pathway; LL-2,6-diaminopimelate from (S)-tetrahydrodipicolinate (acetylase route): step 1/3. Functionally, catalyzes the transfer of an acetyl group from acetyl-CoA to tetrahydrodipicolinate. The chain is 2,3,4,5-tetrahydropyridine-2,6-dicarboxylate N-acetyltransferase from Clostridium beijerinckii (strain ATCC 51743 / NCIMB 8052) (Clostridium acetobutylicum).